A 240-amino-acid chain; its full sequence is Epoxyqueuosine reductase QueH (240 aa).

Residues cysteine 43, cysteine 44, cysteine 129, and cysteine 132 each coordinate [4Fe-4S] cluster. Cysteine 211 and cysteine 213 are joined by a disulfide.

The protein belongs to the QueH family.

It catalyses the reaction epoxyqueuosine(34) in tRNA + AH2 = queuosine(34) in tRNA + A + H2O. The protein operates within tRNA modification; tRNA-queuosine biosynthesis. Catalyzes the conversion of epoxyqueuosine (oQ) to queuosine (Q), which is a hypermodified base found in the wobble positions of tRNA(Asp), tRNA(Asn), tRNA(His) and tRNA(Tyr). The sequence is that of Epoxyqueuosine reductase QueH from Staphylococcus aureus (strain Mu50 / ATCC 700699).